The sequence spans 299 residues: MSMSRLGLLLFVAILLVLLQSSTCLISSPSSIINPSKVKQVSSKPRAFVYEGFLTDLECDHLISLAKENLQRSAVADNDNGESQVSDVRTSSGTFISKGKDPIVSGIEDKLSTWTFLPKENGEDLQVLRYEHGQKYDAHFDYFHDKVNIARGGHRIATVLLYLSNVTKGGETVFPDAQEFSRRSLSENKDDLSDCAKKGIAVKPKKGNALLFFNLQQDAIPDPFSLHGGCPVIEGEKWSATKWIHVDSFDKILTHDGNCTDVNESCERWAVLGECGKNPEYMVGTPEIPGNCRRSCKAC.

The Cytoplasmic segment spans residues 1-5; it reads MSMSR. The helical; Signal-anchor for type II membrane protein transmembrane segment at 6 to 26 threads the bilayer; it reads LGLLLFVAILLVLLQSSTCLI. Topologically, residues 27–299 are lumenal; it reads SSPSSIINPS…GNCRRSCKAC (273 aa). Residues 121–246 form the Fe2OG dioxygenase domain; it reads NGEDLQVLRY…KWSATKWIHV (126 aa). Residues histidine 139 and aspartate 141 each coordinate Fe cation. Asparagine 165 carries an N-linked (GlcNAc...) asparagine glycan. Histidine 227 contacts Fe cation. A 2-oxoglutarate-binding site is contributed by lysine 237. 2 N-linked (GlcNAc...) asparagine glycosylation sites follow: asparagine 258 and asparagine 263. Residues 259–299 form the ShKT domain; sequence CTDVNESCERWAVLGECGKNPEYMVGTPEIPGNCRRSCKAC. Intrachain disulfides connect cysteine 259-cysteine 299, cysteine 266-cysteine 292, and cysteine 275-cysteine 296.

Belongs to the P4HA family. The cofactor is Fe(2+). Requires L-ascorbate as cofactor. In terms of tissue distribution, expressed in epidermal root hair cells (trichoblasts).

The protein resides in the endoplasmic reticulum membrane. Its subcellular location is the golgi apparatus membrane. It carries out the reaction L-prolyl-[collagen] + 2-oxoglutarate + O2 = trans-4-hydroxy-L-prolyl-[collagen] + succinate + CO2. Catalyzes the post-translational formation of 4-hydroxyproline in -Xaa-Pro-Gly- sequences in proline-rich peptide sequences of plant glycoproteins and other proteins. Hydroxyprolines are important constituent of many plant cell wall glycoproteins such as extensins, hydroxyproline-rich glycoproteins, lectins and arabinogalactan proteins. Possesses high affinity for leucine-rich repeat and proline-rich extensins of root cell walls that are essential for root hair development. Hydroxyprolines define the subsequent O-glycosylation sites by arabinosyltransferases which elongate the O-arabinosides on extensins. Has low affinity for the substrates tested in vitro. In Arabidopsis thaliana (Mouse-ear cress), this protein is Prolyl 4-hydroxylase 2.